The following is a 107-amino-acid chain: UPF0145 protein PM1668 (107 aa).

The protein belongs to the UPF0145 family.

The sequence is that of UPF0145 protein PM1668 from Pasteurella multocida (strain Pm70).